Here is a 146-residue protein sequence, read N- to C-terminus: Neutral phospholipase A2 B (146 aa).

An N-terminal signal peptide occupies residues 1–21 (MNPAHLLILAAVCVSPLGASS). A propeptide spanning residues 22-27 (NRPMPL) is cleaved from the precursor. 7 disulfides stabilise this stretch: Cys-38–Cys-98, Cys-53–Cys-145, Cys-55–Cys-71, Cys-70–Cys-126, Cys-77–Cys-119, Cys-87–Cys-112, and Cys-105–Cys-117. 3 residues coordinate Ca(2+): Tyr-54, Gly-56, and Gly-58. The active site involves His-74. Residue Asp-75 coordinates Ca(2+). The active site involves Asp-120.

It belongs to the phospholipase A2 family. Group I subfamily. D49 sub-subfamily. Ca(2+) is required as a cofactor. In terms of tissue distribution, expressed by the venom gland.

It is found in the secreted. It carries out the reaction a 1,2-diacyl-sn-glycero-3-phosphocholine + H2O = a 1-acyl-sn-glycero-3-phosphocholine + a fatty acid + H(+). PLA2 catalyzes the calcium-dependent hydrolysis of the 2-acyl groups in 3-sn-phosphoglycerides. In Naja sputatrix (Malayan spitting cobra), this protein is Neutral phospholipase A2 B.